The primary structure comprises 472 residues: Glycine--tRNA ligase (472 aa).

The substrate site is built by arginine 109 and glutamate 174. Residues 206-208 (RNE), 216-221 (FRTREF), 293-294 (EL), and 337-340 (GLTR) each bind ATP. 221-225 (FEQME) is a substrate binding site. 333-337 (EPAAG) serves as a coordination point for substrate.

The protein belongs to the class-II aminoacyl-tRNA synthetase family. As to quaternary structure, homodimer.

It localises to the cytoplasm. It carries out the reaction tRNA(Gly) + glycine + ATP = glycyl-tRNA(Gly) + AMP + diphosphate. In terms of biological role, catalyzes the attachment of glycine to tRNA(Gly). This Cutibacterium acnes (strain DSM 16379 / KPA171202) (Propionibacterium acnes) protein is Glycine--tRNA ligase.